Reading from the N-terminus, the 311-residue chain is Ribonuclease Z (311 aa).

His63, His65, Asp67, His68, His141, Asp212, and His270 together coordinate Zn(2+). Residue Asp67 is the Proton acceptor of the active site.

It belongs to the RNase Z family. Homodimer. Zn(2+) serves as cofactor.

The catalysed reaction is Endonucleolytic cleavage of RNA, removing extra 3' nucleotides from tRNA precursor, generating 3' termini of tRNAs. A 3'-hydroxy group is left at the tRNA terminus and a 5'-phosphoryl group is left at the trailer molecule.. Functionally, zinc phosphodiesterase, which displays some tRNA 3'-processing endonuclease activity. Probably involved in tRNA maturation, by removing a 3'-trailer from precursor tRNA. This is Ribonuclease Z from Lactiplantibacillus plantarum (strain ATCC BAA-793 / NCIMB 8826 / WCFS1) (Lactobacillus plantarum).